Reading from the N-terminus, the 376-residue chain is 3-dehydroquinate synthase (376 aa).

NAD(+) is bound by residues 115–119, 139–140, Lys152, and Lys161; these read GVIGD and TS. Zn(2+) contacts are provided by Glu194, His256, and His275.

It belongs to the sugar phosphate cyclases superfamily. Dehydroquinate synthase family. Co(2+) serves as cofactor. It depends on Zn(2+) as a cofactor. Requires NAD(+) as cofactor.

It localises to the cytoplasm. The enzyme catalyses 7-phospho-2-dehydro-3-deoxy-D-arabino-heptonate = 3-dehydroquinate + phosphate. It participates in metabolic intermediate biosynthesis; chorismate biosynthesis; chorismate from D-erythrose 4-phosphate and phosphoenolpyruvate: step 2/7. Catalyzes the conversion of 3-deoxy-D-arabino-heptulosonate 7-phosphate (DAHP) to dehydroquinate (DHQ). This is 3-dehydroquinate synthase from Rhizobium johnstonii (strain DSM 114642 / LMG 32736 / 3841) (Rhizobium leguminosarum bv. viciae).